The sequence spans 151 residues: Inorganic triphosphatase (151 aa).

In terms of domain architecture, CYTH spans Met-1–Leu-148. The active-site Proton acceptor is the Tyr-27.

In terms of assembly, homodimer.

It catalyses the reaction triphosphate + H2O = phosphate + diphosphate. Activated by magnesium and mangenese ions, and inhibited by calcium, zinc and copper ions. Its function is as follows. Involved in the hydrolysis of the beta-gamma-phosphoanhydride linkage of triphosphate-containing substrates (inorganic or nucleoside-linked). Catalyzes the hydrolysis of inorganic triphosphate (PPPi). The enzyme has a strong preference for linear PPPi compared with cyclic PPPi (cyclic trimetaphosphate) and to the linear P4. The longer chains polyphosphate are not hydrolyzed. It has only a slight thiamine triphosphatase (ThTPase) activity. Nucleoside triphosphatase activity is negligible in the presence of magnesium, but a small activity is observed in the presence of manganese, in particular with GTP. This chain is Inorganic triphosphatase, found in Nitrosomonas europaea (strain ATCC 19718 / CIP 103999 / KCTC 2705 / NBRC 14298).